The sequence spans 221 residues: NADH-ubiquinone oxidoreductase chain 4 (221 aa).

Transmembrane regions (helical) follow at residues 5 to 25, 34 to 54, 61 to 81, 100 to 120, 140 to 160, and 185 to 205; these read YTYI…FSTL, IAYS…SNTI, IALG…AGGI, IMPI…GTPL, ILGV…IFMY, and FIML…PAPI.

This sequence belongs to the complex I subunit 4 family.

The protein localises to the mitochondrion membrane. It catalyses the reaction a ubiquinone + NADH + 5 H(+)(in) = a ubiquinol + NAD(+) + 4 H(+)(out). In terms of biological role, core subunit of the mitochondrial membrane respiratory chain NADH dehydrogenase (Complex I) that is believed to belong to the minimal assembly required for catalysis. Complex I functions in the transfer of electrons from NADH to the respiratory chain. The immediate electron acceptor for the enzyme is believed to be ubiquinone. The chain is NADH-ubiquinone oxidoreductase chain 4 (nd4) from Emericella nidulans (Aspergillus nidulans).